The chain runs to 307 residues: Ethylmalonyl-CoA decarboxylase (307 aa).

Alanine 2 is modified (N-acetylalanine). An N6-acetyllysine; alternate modification is found at lysine 217. Lysine 217 carries the N6-succinyllysine; alternate modification. At lysine 301 the chain carries N6-succinyllysine.

This sequence belongs to the enoyl-CoA hydratase/isomerase family.

Its subcellular location is the cytoplasm. It localises to the cytosol. It carries out the reaction (2S)-ethylmalonyl-CoA + H(+) = butanoyl-CoA + CO2. The enzyme catalyses (S)-methylmalonyl-CoA + H(+) = propanoyl-CoA + CO2. The catalysed reaction is (2R)-ethylmalonyl-CoA + H(+) = butanoyl-CoA + CO2. Decarboxylates ethylmalonyl-CoA, a potentially toxic metabolite, to form butyryl-CoA, suggesting it might be involved in metabolite proofreading. Acts preferentially on (S)-ethylmalonyl-CoA but also has some activity on the (R)-isomer. Also has methylmalonyl-CoA decarboxylase activity at lower level. The sequence is that of Ethylmalonyl-CoA decarboxylase (ECHDC1) from Homo sapiens (Human).